The following is a 238-amino-acid chain: Single-stranded DNA-binding protein WHY2, mitochondrial (238 aa).

A mitochondrion-targeting transit peptide spans Met-1–Phe-29. Residues Lys-62 to Leu-67 are required for ssDNA binding.

It belongs to the Whirly family. As to quaternary structure, homotetramer.

Its subcellular location is the mitochondrion. In terms of biological role, single-stranded DNA-binding protein that associates with mitochondrial DNA and may play a role in the regulation of the gene expression machinery. Also seems to be required to prevent break-induced DNA rearrangements in the mitochondrial genome. Can bind to melt double-stranded DNA in vivo. This chain is Single-stranded DNA-binding protein WHY2, mitochondrial (WHY2), found in Arabidopsis thaliana (Mouse-ear cress).